The primary structure comprises 185 residues: Elongation factor P (185 aa).

It belongs to the elongation factor P family.

It is found in the cytoplasm. The protein operates within protein biosynthesis; polypeptide chain elongation. Functionally, involved in peptide bond synthesis. Stimulates efficient translation and peptide-bond synthesis on native or reconstituted 70S ribosomes in vitro. Probably functions indirectly by altering the affinity of the ribosome for aminoacyl-tRNA, thus increasing their reactivity as acceptors for peptidyl transferase. In Cyanothece sp. (strain PCC 7425 / ATCC 29141), this protein is Elongation factor P.